Consider the following 124-residue polypeptide: Small ribosomal subunit protein uS12 (124 aa).

A disordered region spans residues 1 to 23; it reads MATINQLVRKPRKRPVAKSDVPA. At Asp-89 the chain carries 3-methylthioaspartic acid. Positions 101 to 124 are disordered; sequence ALDTSGVQNRRQGRSKYGTKRPKS. Over residues 111-124 the composition is skewed to basic residues; sequence RQGRSKYGTKRPKS.

This sequence belongs to the universal ribosomal protein uS12 family. As to quaternary structure, part of the 30S ribosomal subunit. Contacts proteins S8 and S17. May interact with IF1 in the 30S initiation complex.

With S4 and S5 plays an important role in translational accuracy. Functionally, interacts with and stabilizes bases of the 16S rRNA that are involved in tRNA selection in the A site and with the mRNA backbone. Located at the interface of the 30S and 50S subunits, it traverses the body of the 30S subunit contacting proteins on the other side and probably holding the rRNA structure together. The combined cluster of proteins S8, S12 and S17 appears to hold together the shoulder and platform of the 30S subunit. The chain is Small ribosomal subunit protein uS12 from Chromohalobacter salexigens (strain ATCC BAA-138 / DSM 3043 / CIP 106854 / NCIMB 13768 / 1H11).